The following is a 183-amino-acid chain: ADP-ribosylation factor-like protein 1 (183 aa).

Gly2 carries N-myristoyl glycine lipidation. GTP is bound by residues 25–32 (GLDGAGKT), 68–72 (DLGGQ), and 127–130 (NKQD).

This sequence belongs to the small GTPase superfamily. Arf family. Homodimer. Interacts with IMH1 (via GRIP domain); the interaction is dependent on GTP. Interacts with MON2.

It is found in the golgi apparatus. Recruits golgins such as IMH1 to the Golgi. Can bind and hydrolyze GTP. May be involved in trafficking events within the endosomal system. This chain is ADP-ribosylation factor-like protein 1 (ARL1), found in Saccharomyces cerevisiae (strain ATCC 204508 / S288c) (Baker's yeast).